The chain runs to 65 residues: Large ribosomal subunit protein bL35 (65 aa).

The span at 1-16 (MPKQKTHRASAKRFKR) shows a compositional bias: basic residues. Residues 1-20 (MPKQKTHRASAKRFKRTGSG) form a disordered region.

This sequence belongs to the bacterial ribosomal protein bL35 family.

This chain is Large ribosomal subunit protein bL35, found in Streptococcus equi subsp. equi (strain 4047).